A 186-amino-acid polypeptide reads, in one-letter code: Elongation factor P (186 aa).

The protein belongs to the elongation factor P family.

Its subcellular location is the cytoplasm. It participates in protein biosynthesis; polypeptide chain elongation. Functionally, involved in peptide bond synthesis. Stimulates efficient translation and peptide-bond synthesis on native or reconstituted 70S ribosomes in vitro. Probably functions indirectly by altering the affinity of the ribosome for aminoacyl-tRNA, thus increasing their reactivity as acceptors for peptidyl transferase. This Shewanella sp. (strain W3-18-1) protein is Elongation factor P.